Consider the following 310-residue polypeptide: HTH-type transcriptional regulator CbbR (310 aa).

Residues 7 to 64 (ITLKQLRALVAVAGSASLTGGATRLGLTPPAIHSQIRNLEEAFGVPLLHRPPETGSFT) enclose the HTH lysR-type domain. The segment at residues 24 to 43 (LTGGATRLGLTPPAIHSQIR) is a DNA-binding region (H-T-H motif).

It belongs to the LysR transcriptional regulatory family.

In terms of biological role, transcriptional activator for the cbb operon for RuBisCO and other Calvin cycle genes. This is HTH-type transcriptional regulator CbbR (cbbR) from Cereibacter sphaeroides (Rhodobacter sphaeroides).